The primary structure comprises 230 residues: MNIRSFLLISIFTAISYLVVDGATPRTFAPSASVSINYGTLSTVFPSLYRRASTSSSSSSSSISTSHDSQPSTSSSSPSSTSTSSSSGTSVITASDVSASNEIISSSTNNSIHQQVSVVTEYVTIQPTTYVTTIFQYTSLASTIAAQSGIASLVPQTYTPYGGVKALIGILVGVVVGSVFLLAIVMVIARIWGPRLLANKDQNNNNEDLDSNLVSKDSEGTPQITYASNF.

Residues 1–22 (MNIRSFLLISIFTAISYLVVDG) form the signal peptide. The Lumenal portion of the chain corresponds to 23 to 167 (ATPRTFAPSA…YTPYGGVKAL (145 aa)). A disordered region spans residues 55–90 (SSSSSSSSISTSHDSQPSTSSSSPSSTSTSSSSGTS). The chain crosses the membrane as a helical span at residues 168–188 (IGILVGVVVGSVFLLAIVMVI). The Cytoplasmic segment spans residues 189–230 (ARIWGPRLLANKDQNNNNEDLDSNLVSKDSEGTPQITYASNF). The interval 208 to 230 (DLDSNLVSKDSEGTPQITYASNF) is disordered.

It is found in the endoplasmic reticulum membrane. This is an uncharacterized protein from Schizosaccharomyces pombe (strain 972 / ATCC 24843) (Fission yeast).